We begin with the raw amino-acid sequence, 336 residues long: Protease HtpX homolog (336 aa).

Transmembrane regions (helical) follow at residues alanine 7–isoleucine 24 and glycine 29–alanine 48. A Zn(2+)-binding site is contributed by histidine 130. The active site involves glutamate 131. Residue histidine 134 coordinates Zn(2+). 2 consecutive transmembrane segments (helical) span residues isoleucine 145 to glycine 165 and proline 171 to valine 191. Residue glutamate 200 participates in Zn(2+) binding. Positions glutamine 278–alanine 287 are enriched in low complexity. Residues glutamine 278–serine 336 form a disordered region.

Belongs to the peptidase M48B family. Zn(2+) is required as a cofactor.

Its subcellular location is the cell inner membrane. This is Protease HtpX homolog from Mesorhizobium japonicum (strain LMG 29417 / CECT 9101 / MAFF 303099) (Mesorhizobium loti (strain MAFF 303099)).